Consider the following 274-residue polypeptide: MSQVVQTRRLQAVDLIKRKAEGRKIISLTAYHAHTAGIVDAYCDFVLVGDSLGMVMHGMESTLPVTLEMMILQAQAVMRGTSRALVVVDMPFGSYEASREQAFLNAARVLKETGAGAIKLEGGARFAETVAFLTERGVPVMGHIGLTPQSVNTMGGFKVQGHGAGDEDRLRADARAISDAGAFAIVLEGIVEPVARAIATDPAIRAATIGIGATAACDGQILVLEDMLGLSDRVPRFVKSYGSLRAHIEEAVRAYADEVQAGRFPAEGHTYPPR.

Positions 50 and 89 each coordinate Mg(2+). Residues aspartate 50–serine 51, aspartate 89, and lysine 119 each bind 3-methyl-2-oxobutanoate. Glutamate 121 serves as a coordination point for Mg(2+). Glutamate 188 (proton acceptor) is an active-site residue.

This sequence belongs to the PanB family. As to quaternary structure, homodecamer; pentamer of dimers. It depends on Mg(2+) as a cofactor.

The protein localises to the cytoplasm. It catalyses the reaction 3-methyl-2-oxobutanoate + (6R)-5,10-methylene-5,6,7,8-tetrahydrofolate + H2O = 2-dehydropantoate + (6S)-5,6,7,8-tetrahydrofolate. The protein operates within cofactor biosynthesis; (R)-pantothenate biosynthesis; (R)-pantoate from 3-methyl-2-oxobutanoate: step 1/2. Its function is as follows. Catalyzes the reversible reaction in which hydroxymethyl group from 5,10-methylenetetrahydrofolate is transferred onto alpha-ketoisovalerate to form ketopantoate. In Methylorubrum extorquens (strain PA1) (Methylobacterium extorquens), this protein is 3-methyl-2-oxobutanoate hydroxymethyltransferase.